The following is a 696-amino-acid chain: Polyribonucleotide nucleotidyltransferase (696 aa).

Residues aspartate 483 and aspartate 489 each coordinate Mg(2+). In terms of domain architecture, KH spans 550 to 609; that stretch reads PRITTIWVKVDKIRDVIGSGGKNIRSVTEATGVSIDIDDTGKINIASTNKEACDLAIKMI. An S1 motif domain is found at 619–687; that stretch reads GKLYMGTVKK…KQGKIKLSRK (69 aa).

It belongs to the polyribonucleotide nucleotidyltransferase family. Requires Mg(2+) as cofactor.

The protein resides in the cytoplasm. It carries out the reaction RNA(n+1) + phosphate = RNA(n) + a ribonucleoside 5'-diphosphate. Involved in mRNA degradation. Catalyzes the phosphorolysis of single-stranded polyribonucleotides processively in the 3'- to 5'-direction. The protein is Polyribonucleotide nucleotidyltransferase of Geobacter sp. (strain M21).